The sequence spans 366 residues: Probable S-adenosyl-L-methionine-binding protein AF_0433 (366 aa).

In terms of domain architecture, TsaA-like spans 6–136; sequence LRQVGVIRSP…YSSTIDSVGN (131 aa). S-adenosyl-L-methionine contacts are provided by residues 23 to 25, 61 to 62, arginine 85, and 116 to 119; these read PHQ, DR, and LDGT.

It belongs to the tRNA methyltransferase O family.

The polypeptide is Probable S-adenosyl-L-methionine-binding protein AF_0433 (Archaeoglobus fulgidus (strain ATCC 49558 / DSM 4304 / JCM 9628 / NBRC 100126 / VC-16)).